The chain runs to 90 residues: Bombyxin G-1 (90 aa).

An N-terminal signal peptide occupies residues 1-19 (MKLIIFVVFCITIYGSTSG). Cystine bridges form between Cys28–Cys77, Cys40–Cys90, and Cys76–Cys81. A propeptide spans 49 to 67 (NTQYEGYHWPLLAYSEERI) (c peptide like).

This sequence belongs to the insulin family. As to quaternary structure, heterodimer of a B chain and an A chain linked by two disulfide bonds.

It localises to the secreted. This is Bombyxin G-1 (BBXG1) from Bombyx mori (Silk moth).